The following is a 1046-amino-acid chain: FERM, ARHGEF and pleckstrin domain-containing protein 1 (1046 aa).

The FERM domain occupies 40 to 320; the sequence is ISIKIQMLDD…EHHAFFRLFE (281 aa). The tract at residues 374 to 522 is disordered; sequence LTAQPSEQHA…LISPLLNDPS (149 aa). Residues 413 to 424 show a composition bias toward basic and acidic residues; the sequence is KELKASTEDTGQ. A compositionally biased stretch (polar residues) spans 458 to 513; that stretch reads RMQQNRPQSQQPSTAGSLTGSPHLSELSINSQGGPSVANMSLSPNLSPDAKQSSPL. The DH domain maps to 541-732; that stretch reads KAYFIAKEVA…TEMMAQLHGN (192 aa). Positions 761 to 858 constitute a PH 1 domain; the sequence is EFIRLGSLSK…WIEDIQMAID (98 aa). The disordered stretch occupies residues 864-907; the sequence is SDPVPELLASSPPDNKSPDETTVDQESEDDLSASRTSLERQSPH. Acidic residues predominate over residues 884-894; it reads TTVDQESEDDL. Positions 933-1030 constitute a PH 2 domain; the sequence is ENQLSGNLLR…WMEVIRSATS (98 aa).

Interacts with PLXNA4. As to expression, detected in lateral motor column motor neurons and in preganglionic autonomic motor neurons of the column of Terni in the embryonic spinal cord (at protein level).

The protein resides in the cell membrane. It localises to the synapse. It is found in the synaptosome. Its subcellular location is the cytoplasm. The protein localises to the cytosol. The protein resides in the cell projection. It localises to the filopodium. It is found in the dendrite. Its subcellular location is the dendritic spine. Its function is as follows. Functions as a guanine nucleotide exchange factor for RAC1. Plays a role in semaphorin signaling via its interaction with PLXNA4. Plays a role in the assembly and disassembly of dendritic filopodia, the formation of dendritic spines, regulation of dendrite length and ultimately the formation of synapses. This Gallus gallus (Chicken) protein is FERM, ARHGEF and pleckstrin domain-containing protein 1 (FARP1).